Reading from the N-terminus, the 239-residue chain is tRNA (guanine-N(7)-)-methyltransferase (239 aa).

S-adenosyl-L-methionine contacts are provided by Glu69, Glu94, Asp121, and Asp144. Residue Asp144 is part of the active site. Substrate is bound at residue Lys148. Positions 150–155 (RHNKRR) are interaction with RNA. Substrate contacts are provided by residues Asp180 and 217-220 (TKFE).

It belongs to the class I-like SAM-binding methyltransferase superfamily. TrmB family. As to quaternary structure, monomer.

The enzyme catalyses guanosine(46) in tRNA + S-adenosyl-L-methionine = N(7)-methylguanosine(46) in tRNA + S-adenosyl-L-homocysteine. The protein operates within tRNA modification; N(7)-methylguanine-tRNA biosynthesis. Functionally, catalyzes the formation of N(7)-methylguanine at position 46 (m7G46) in tRNA. In Salmonella typhimurium (strain LT2 / SGSC1412 / ATCC 700720), this protein is tRNA (guanine-N(7)-)-methyltransferase.